The chain runs to 384 residues: PqqA peptide cyclase (384 aa).

Residues 5–220 form the Radical SAM core domain; the sequence is VGLPLWLLAE…TNEYREKLKA (216 aa). [4Fe-4S] cluster is bound by residues Cys19, Cys23, and Cys26.

It belongs to the radical SAM superfamily. PqqE family. Interacts with PqqD. The interaction is necessary for activity of PqqE. [4Fe-4S] cluster serves as cofactor.

It catalyses the reaction [PQQ precursor protein] + S-adenosyl-L-methionine = E-Y cross-linked-[PQQ precursor protein] + 5'-deoxyadenosine + L-methionine + H(+). The protein operates within cofactor biosynthesis; pyrroloquinoline quinone biosynthesis. Catalyzes the cross-linking of a glutamate residue and a tyrosine residue in the PqqA protein as part of the biosynthesis of pyrroloquinoline quinone (PQQ). The sequence is that of PqqA peptide cyclase from Acinetobacter baumannii (strain ACICU).